Reading from the N-terminus, the 86-residue chain is Exodeoxyribonuclease 7 small subunit (86 aa).

Belongs to the XseB family. As to quaternary structure, heterooligomer composed of large and small subunits.

It localises to the cytoplasm. The catalysed reaction is Exonucleolytic cleavage in either 5'- to 3'- or 3'- to 5'-direction to yield nucleoside 5'-phosphates.. Bidirectionally degrades single-stranded DNA into large acid-insoluble oligonucleotides, which are then degraded further into small acid-soluble oligonucleotides. This chain is Exodeoxyribonuclease 7 small subunit, found in Agrobacterium fabrum (strain C58 / ATCC 33970) (Agrobacterium tumefaciens (strain C58)).